The following is a 1058-amino-acid chain: Non-canonical non-ribosomal peptide synthetase FUB8 (1058 aa).

The adenylation (A) domain stretch occupies residues 43–365 (EISRDEPDRV…LASVVMHPDE (323 aa)). The 78-residue stretch at 566–643 (TTEDVVRSGI…QLSHSVWTHL (78 aa)) folds into the Carrier domain. An O-(pantetheine 4'-phosphoryl)serine modification is found at Ser601. Residues 680–921 (LTGTTGEIGS…IPIDLLAEVI (242 aa)) form a thioester reductase (TR) domain region.

The protein operates within mycotoxin biosynthesis. Non-canonical non-ribosomal peptide synthetase; part of the gene cluster that mediates the biosynthesis of fusaric acid, a mycotoxin with low to moderate toxicity to animals and humans, but with high phytotoxic properties. L-aspartate is suggested as fusaric acid amino acid precursor that is activated and further processed to O-acetyl-L-homoserine by cluster enzymes aspartate kinase FUB3 and homoserine O-acetyltransferase FUB5, as well as enzymes of the primary metabolism. The polyketide synthase (PKS) FUB1 generates the triketide trans-2-hexenal which is presumptively released by the hydrolase FUB4 and linked to the NRPS-bound amino acid precursor by NAD(P)-dependent dehydrogenase FUB6. FUB1, FUB4, and the non-canonical NRPS Fub8 may form an enzyme complex. Further processing of the NRPS-bound intermediate might be carried out by FUB6 and the sulfhydrylase FUB7, enabling a spontaneous electrocyclization to close the carbon backbone of fusaric acid. Dihydrofusaric acid is likely to be released via reduction by the thioester reductase (TR) domain of FUB8 whereupon the final oxidation to fusaric acid may (also) be performed by the FMN-dependent dehydrogenase FUB9. The protein is Non-canonical non-ribosomal peptide synthetase FUB8 of Gibberella moniliformis (strain M3125 / FGSC 7600) (Maize ear and stalk rot fungus).